A 159-amino-acid polypeptide reads, in one-letter code: Ribose-5-phosphate isomerase B (159 aa).

D-ribulose 5-phosphate contacts are provided by residues 8 to 9 (DH) and 67 to 71 (GSGNG). The active-site Proton acceptor is glutamate 72. Catalysis depends on histidine 99, which acts as the Proton donor. 4 residues coordinate D-ribulose 5-phosphate: asparagine 100, arginine 110, arginine 134, and arginine 138.

Belongs to the LacAB/RpiB family. Homodimer.

The catalysed reaction is aldehydo-D-ribose 5-phosphate = D-ribulose 5-phosphate. Its pathway is carbohydrate degradation; pentose phosphate pathway; D-ribose 5-phosphate from D-ribulose 5-phosphate (non-oxidative stage): step 1/1. Functionally, catalyzes the interconversion of ribulose-5-P and ribose-5-P. This chain is Ribose-5-phosphate isomerase B, found in Mycolicibacterium paratuberculosis (strain ATCC BAA-968 / K-10) (Mycobacterium paratuberculosis).